Reading from the N-terminus, the 236-residue chain is Leucyl/phenylalanyl-tRNA--protein transferase (236 aa).

This sequence belongs to the L/F-transferase family.

It is found in the cytoplasm. The catalysed reaction is N-terminal L-lysyl-[protein] + L-leucyl-tRNA(Leu) = N-terminal L-leucyl-L-lysyl-[protein] + tRNA(Leu) + H(+). The enzyme catalyses N-terminal L-arginyl-[protein] + L-leucyl-tRNA(Leu) = N-terminal L-leucyl-L-arginyl-[protein] + tRNA(Leu) + H(+). It carries out the reaction L-phenylalanyl-tRNA(Phe) + an N-terminal L-alpha-aminoacyl-[protein] = an N-terminal L-phenylalanyl-L-alpha-aminoacyl-[protein] + tRNA(Phe). Functionally, functions in the N-end rule pathway of protein degradation where it conjugates Leu, Phe and, less efficiently, Met from aminoacyl-tRNAs to the N-termini of proteins containing an N-terminal arginine or lysine. This Shewanella halifaxensis (strain HAW-EB4) protein is Leucyl/phenylalanyl-tRNA--protein transferase.